A 446-amino-acid chain; its full sequence is Probable cytosolic iron-sulfur protein assembly protein 1 (446 aa).

WD repeat units lie at residues 17–59 (AFKP…AHSN), 63–106 (GHTR…PLEE), 143–182 (GHEN…EGDD), 192–241 (EHDG…EWAC), 247–291 (GHSS…PEAS), 330–368 (VHTR…NPST), and 398–446 (GHGP…SIEL). Positions 106 to 128 (EGTKKGESTEIDVTRRRNNNDSD) are enriched in basic and acidic residues. Residues 106–133 (EGTKKGESTEIDVTRRRNNNDSDKDNDD) form a disordered region.

This sequence belongs to the WD repeat CIA1 family.

Its function is as follows. Essential component of the cytosolic iron-sulfur (Fe/S) protein assembly machinery. Required for the maturation of extramitochondrial Fe/S proteins. The polypeptide is Probable cytosolic iron-sulfur protein assembly protein 1 (Pyricularia oryzae (strain 70-15 / ATCC MYA-4617 / FGSC 8958) (Rice blast fungus)).